Consider the following 668-residue polypeptide: Putative ankyrin repeat protein FPV244 (668 aa).

ANK repeat units lie at residues 40 to 69 (IPFT…KLIY), 144 to 173 (EYMK…DVNA), 177 to 206 (YCRT…DVNI), 210 to 239 (DDLS…NINK), 272 to 302 (YKNT…DVNA), 306 to 336 (KGET…DVNA), 340 to 370 (LYIT…NVNA), 374 to 403 (CDKT…DIEA), 407 to 437 (KIGT…NVNS), 441 to 471 (YLST…DVNA), 473 to 502 (NIRN…ELRD), and 571 to 602 (NMFY…EINT).

The chain is Putative ankyrin repeat protein FPV244 from Vertebrata (FPV).